The primary structure comprises 258 residues: Acyl-[acyl-carrier-protein]--UDP-N-acetylglucosamine O-acyltransferase (258 aa).

This sequence belongs to the transferase hexapeptide repeat family. LpxA subfamily. In terms of assembly, homotrimer.

The protein localises to the cytoplasm. The enzyme catalyses a (3R)-hydroxyacyl-[ACP] + UDP-N-acetyl-alpha-D-glucosamine = a UDP-3-O-[(3R)-3-hydroxyacyl]-N-acetyl-alpha-D-glucosamine + holo-[ACP]. It functions in the pathway glycolipid biosynthesis; lipid IV(A) biosynthesis; lipid IV(A) from (3R)-3-hydroxytetradecanoyl-[acyl-carrier-protein] and UDP-N-acetyl-alpha-D-glucosamine: step 1/6. Functionally, involved in the biosynthesis of lipid A, a phosphorylated glycolipid that anchors the lipopolysaccharide to the outer membrane of the cell. This chain is Acyl-[acyl-carrier-protein]--UDP-N-acetylglucosamine O-acyltransferase, found in Pseudomonas entomophila (strain L48).